Consider the following 301-residue polypeptide: Probable alpha-L-glutamate ligase (301 aa).

One can recognise an ATP-grasp domain in the interval 104–287 (LQLLSRKGIG…VADMIFEFIE (184 aa)). Residues Lys-141, 178–179 (EF), Asp-187, and 211–213 (RSN) contribute to the ATP site. Residues Asp-248, Glu-260, and Asn-262 each coordinate Mg(2+). Mn(2+) contacts are provided by Asp-248, Glu-260, and Asn-262.

This sequence belongs to the RimK family. It depends on Mg(2+) as a cofactor. Mn(2+) serves as cofactor.

This Vibrio atlanticus (strain LGP32) (Vibrio splendidus (strain Mel32)) protein is Probable alpha-L-glutamate ligase.